The sequence spans 308 residues: uncharacterized protein (308 aa).

The disordered stretch occupies residues 19-43 (EPQASGAGPAQTPPPVTVPMTPPSK). Positions 29–43 (QTPPPVTVPMTPPSK) are enriched in pro residues.

This is an uncharacterized protein from Deinococcus radiodurans (strain ATCC 13939 / DSM 20539 / JCM 16871 / CCUG 27074 / LMG 4051 / NBRC 15346 / NCIMB 9279 / VKM B-1422 / R1).